A 299-amino-acid chain; its full sequence is UDP-N-acetylenolpyruvoylglucosamine reductase (299 aa).

The 162-residue stretch at 31–192 (VGGVAEVVFK…VDATFVGACG (162 aa)) folds into the FAD-binding PCMH-type domain. R172 is an active-site residue. Catalysis depends on S221, which acts as the Proton donor. E291 is a catalytic residue.

This sequence belongs to the MurB family. It depends on FAD as a cofactor.

Its subcellular location is the cytoplasm. The enzyme catalyses UDP-N-acetyl-alpha-D-muramate + NADP(+) = UDP-N-acetyl-3-O-(1-carboxyvinyl)-alpha-D-glucosamine + NADPH + H(+). Its pathway is cell wall biogenesis; peptidoglycan biosynthesis. In terms of biological role, cell wall formation. The chain is UDP-N-acetylenolpyruvoylglucosamine reductase from Anaplasma marginale (strain St. Maries).